Consider the following 885-residue polypeptide: Insulin receptor substrate 1-A (885 aa).

In terms of domain architecture, IRS-type PTB spans 1-56 (MNIRRCGHSENFFFIEVGRSAVTGAGEFWMQVDDSVVAQNMHETILEAMKALSDEF). Positions 56-225 (FRPRSKSQSS…GGFISSDEYG (170 aa)) are disordered. 4 stretches are compositionally biased toward low complexity: residues 61 to 75 (KSQS…ISVP), 99 to 109 (SATATSPAGGA), 176 to 197 (SPSA…GSTS), and 205 to 217 (SSAS…SDGG). Serine 104 is subject to Phosphoserine. Tyrosine 257 bears the Phosphotyrosine; by INSR mark. The short motif at 257 to 260 (YICM) is the YXXM motif 1 element. 2 stretches are compositionally biased toward polar residues: residues 263–276 (SSSH…QRYQ) and 296–313 (SSGT…PSQS). 2 disordered regions span residues 263–282 (SSSH…RGEE) and 293–313 (RTHS…PSQS). Short sequence motifs (YXXM motif) lie at residues 318–321 (YTEM), 364–367 (YMPM), 381–384 (YMPM), 409–412 (YMMM), and 451–454 (YINM). Phosphotyrosine; by INSR is present on residues tyrosine 364 and tyrosine 381. The residue at position 409 (tyrosine 409) is a Phosphotyrosine. The segment at 501-581 (NLRISANSGH…LPPEPKSPGE (81 aa)) is disordered. The segment covering 504 to 515 (ISANSGHNLYTE) has biased composition (polar residues). Positions 516–526 (DSSSSSTSSDS) are enriched in low complexity. Tyrosine 582 and tyrosine 620 each carry phosphotyrosine; by INSR. Residues 582 to 584 (YVN) form a GRB2-binding region. The YXXM motif 7 motif lies at 620-623 (YMNM). Residues 637–660 (TSSYEPPNKPVNSVCPTETCSSSR) show a composition bias toward polar residues. The interval 637-665 (TSSYEPPNKPVNSVCPTETCSSSRPPIRG) is disordered. Tyrosine 672 carries the post-translational modification Phosphotyrosine; by INSR. Short sequence motifs (YXXM motif) lie at residues 672–675 (YMSM) and 706–709 (YAEM). Positions 732–803 (ASRSSLLGQG…SGEDVKRHSS (72 aa)) are disordered. 2 stretches are compositionally biased toward polar residues: residues 743-758 (GPSA…NRNP) and 777-792 (ETFS…TTGP). Tyrosine 834 and tyrosine 866 each carry phosphotyrosine; by INSR.

As to quaternary structure, interacts with the NPXY motif of tyrosine-phosphorylated igf1r and insr via the PTB domain. Binds to phosphatidylinositol 3-kinase p85 subunit at a low level in vitro prior to phosphorylation. Binding is greatly enhanced following tyrosine phosphorylation by insr and probably occurs via the phosphorylated YXXM motifs. Phosphorylation of Tyr-582 is required for grb2-binding.

May mediate the control of various cellular processes by insulin. When phosphorylated by the insulin receptor binds specifically to various cellular proteins containing SH2 domains such as phosphatidylinositol 3-kinase p85 subunit or grb2. Activates phosphatidylinositol 3-kinase when bound to the regulatory p85 subunit. In Xenopus laevis (African clawed frog), this protein is Insulin receptor substrate 1-A (irs1-a).